Consider the following 74-residue polypeptide: Exodeoxyribonuclease 7 small subunit (74 aa).

This sequence belongs to the XseB family. Heterooligomer composed of large and small subunits.

It localises to the cytoplasm. The catalysed reaction is Exonucleolytic cleavage in either 5'- to 3'- or 3'- to 5'-direction to yield nucleoside 5'-phosphates.. Functionally, bidirectionally degrades single-stranded DNA into large acid-insoluble oligonucleotides, which are then degraded further into small acid-soluble oligonucleotides. This chain is Exodeoxyribonuclease 7 small subunit, found in Clostridium beijerinckii (strain ATCC 51743 / NCIMB 8052) (Clostridium acetobutylicum).